Here is an 82-residue protein sequence, read N- to C-terminus: NAD(P)H-quinone oxidoreductase subunit O (82 aa).

The protein belongs to the complex I NdhO subunit family. In terms of assembly, NDH-1 can be composed of about 15 different subunits; different subcomplexes with different compositions have been identified which probably have different functions.

It is found in the cellular thylakoid membrane. The enzyme catalyses a plastoquinone + NADH + (n+1) H(+)(in) = a plastoquinol + NAD(+) + n H(+)(out). It catalyses the reaction a plastoquinone + NADPH + (n+1) H(+)(in) = a plastoquinol + NADP(+) + n H(+)(out). Its function is as follows. NDH-1 shuttles electrons from an unknown electron donor, via FMN and iron-sulfur (Fe-S) centers, to quinones in the respiratory and/or the photosynthetic chain. The immediate electron acceptor for the enzyme in this species is believed to be plastoquinone. Couples the redox reaction to proton translocation, and thus conserves the redox energy in a proton gradient. Cyanobacterial NDH-1 also plays a role in inorganic carbon-concentration. This is NAD(P)H-quinone oxidoreductase subunit O from Prochlorococcus marinus (strain MIT 9211).